A 301-amino-acid polypeptide reads, in one-letter code: Nitric oxide synthase-interacting protein (301 aa).

Ser36 is subject to Phosphoserine. The U-box-like stretch occupies residues 55–75; it reads DPVVTPDGYLYEREAILEYIL. The short motif at 78–101 is the Nuclear localization signal element; it reads KKEIARQMKAYEKQRGTRREEQKE. Ser107 is modified (phosphoserine). A disordered region spans residues 132 to 157; the sequence is KALSGTSPDDVQPGPSVGPPSKDKDK.

The protein belongs to the NOSIP family. In terms of assembly, interacts with NOS1 and NOS3. Interacts with PP2A holoenzyme, containing PPP2CA, PPP2CB, PPP2R1A and PPP2R2A subunits. As to expression, expressed in heart, brain and lung. Present in endothelial cells (at protein level).

It localises to the cytoplasm. The protein localises to the nucleus. It catalyses the reaction S-ubiquitinyl-[E2 ubiquitin-conjugating enzyme]-L-cysteine + [acceptor protein]-L-lysine = [E2 ubiquitin-conjugating enzyme]-L-cysteine + N(6)-ubiquitinyl-[acceptor protein]-L-lysine.. Functionally, E3 ubiquitin-protein ligase that is essential for proper development of the forebrain, the eye, and the face. Catalyzes monoubiquitination of serine/threonine-protein phosphatase 2A (PP2A) catalytic subunit PPP2CA/PPP2CB. Negatively regulates nitric oxide production by inducing NOS1 and NOS3 translocation to actin cytoskeleton and inhibiting their enzymatic activity. In Homo sapiens (Human), this protein is Nitric oxide synthase-interacting protein (NOSIP).